The primary structure comprises 1976 residues: MAQRTGLEDPERYLFVDRAVIYNPATQADWTAKKLVWIPSERHGFEAASIKEERGDEVLVELAENGKKAMVNKDDIQKMNPPKFSKVEDMAELTCLNEASVLHNLKDRYYSGLIYTYSGLFCVVINPYKNLPIYSENIIEMYRGKKRHEMPPHIYAISESAYRCMLQDREDQSILCTGESGAGKTENTKKVIQYLAHVASSHKGRKDHNIPGELERQLLQANPILESFGNAKTVKNDNSSRFGKFIRINFDVTGYIVGANIETYLLEKSRAVRQAKDERTFHIFYQLLSGAGEHLKSDLLLEGFNNYRFLSNGYIPIPGQQDKDNFQETMEAMHIMGFSHEEILSMLKVVSSVLQFGNISFKKERNTDQASMPENTVAQKLCHLLGMNVMEFTRAILTPRIKVGRDYVQKAQTKEQADFAVEALAKATYERLFRWLVHRINKALDRTKRQGASFIGILDIAGFEIFELNSFEQLCINYTNEKLQQLFNHTMFILEQEEYQREGIEWNFIDFGLDLQPCIDLIERPANPPGVLALLDEECWFPKATDKTFVEKLVQEQGSHSKFQKPRQLKDKADFCIIHYAGKVDYKADEWLMKNMDPLNDNVATLLHQSSDRFVAELWKDVDRIVGLDQVTGMTETAFGSAYKTKKGMFRTVGQLYKESLTKLMATLRNTNPNFVRCIIPNHEKRAGKLDPHLVLDQLRCNGVLEGIRICRQGFPNRIVFQEFRQRYEILTPNAIPKGFMDGKQACERMIRALELDPNLYRIGQSKIFFRAGVLAHLEEERDLKITDIIIFFQAVCRGYLARKAFAKKQQQLSALKVLQRNCAAYLKLRHWQWWRVFTKVKPLLQVTRQEEELQAKDEELLKVKEKQTKVEGELEEMERKHQQLLEEKNILAEQLQAETELFAEAEEMRARLAAKKQELEEILHDLESRVEEEEERNQILQNEKKKMQAHIQDLEEQLDEEEGARQKLQLEKVTAEAKIKKMEEEILLLEDQNSKFIKEKKLMEDRIAECSSQLAEEEEKAKNLAKIRNKQEVMISDLEERLKKEEKTRQELEKAKRKLDGETTDLQDQIAELQAQIDELKIQVAKKEEELQGALARGDDETLHKNNALKVVRELQAQIAELQEDFESEKASRNKAEKQKRDLSEELEALKTELEDTLDTTAAQQELRTKREQEVAELKKALEEETKSHEAQIQDMRQRHATALEELSEQLEQAKRFKANLEKNKQGLETDNKELACEVKVLQQVKAESEHKRKKLDAQVQELHAKVSEGDRLRVELAEKANKLQNELDNVSTLLEEAEKKGIKFAKDAAGLESQLQDTQELLQEETRQKLNLSSRIRQLEEERSSLQEQQEEEEEARRSLEKQLQALQAQLTDTKKKVDDDLGTIENLEEAKKKLLKDVEVLSQRLEEKALAYDKLEKTKTRLQQELDDLLVDLDHQRQIVSNLEKKQKKFDQLLAEEKNISARYAEERDRAEAEAREKETKALSLARALEEALEAREEAERQNKQLRADMEDLMSSKDDVGKNVHELEKSKRALEQQVEEMRTQLEELEDELQATEDAKLRLEVNMQAMKAQFERDLQTRDEQNEEKKRLLIKQVRELEAELEDERKQRALAVASKKKMEIDLKDLEAQIEAANKARDEVIKQLRKLQAQMKDYQRELEEARASRDEIFAQSKESEKKLKSLEAEILQLQEELASSERARRHAEQERDELADEIANSASGKSALLDEKRRLEARIAQLEEELEEEQSNMELLNDRFRKTTLQVDTLNTELAAERSAAQKSDNARQQLERQNKELKAKLQELEGAVKSKFKATISALEAKIGQLEEQLEQEAKERAAANKLVRRTEKKLKEIFMQVEDERRHADQYKEQMEKANARMKQLKRQLEEAEEEATRANASRRKLQRELDDATEANEGLSREVSTLKNRLRRGGPISFSSSRSGRRQLHIEGASLELSDDDTESKTSDINETQPPQSE.

Position 18 is an omega-N-methylarginine (arginine 18). Residues 31 to 81 (TAKKLVWIPSERHGFEAASIKEERGDEVLVELAENGKKAMVNKDDIQKMNP) enclose the Myosin N-terminal SH3-like domain. The region spanning 85-783 (SKVEDMAELT…VLAHLEEERD (699 aa)) is the Myosin motor domain. 178 to 185 (GESGAGKT) serves as a coordination point for ATP. Lysine 442 carries the post-translational modification N6-acetyllysine. The interval 661–683 (LTKLMATLRNTNPNFVRCIIPNH) is actin-binding. The region spanning 786–815 (ITDIIIFFQAVCRGYLARKAFAKKQQQLSA) is the IQ domain. A coiled-coil region spans residues 845-1976 (LQVTRQEEEL…INETQPPQSE (1132 aa)). Positions 1126 to 1149 (DFESEKASRNKAEKQKRDLSEELE) are disordered. The segment covering 1129–1149 (SEKASRNKAEKQKRDLSEELE) has biased composition (basic and acidic residues). Serine 1145 bears the Phosphoserine mark. N6-acetyllysine occurs at positions 1241, 1301, and 1645. 2 disordered regions span residues 1697–1718 (ASSE…DEIA) and 1874–1976 (KANA…PQSE). Positions 1698 to 1708 (SSERARRHAEQ) are enriched in basic and acidic residues. Arginine 1930 bears the Omega-N-methylarginine mark. 4 positions are modified to phosphoserine: serine 1935, serine 1937, serine 1938, and serine 1939. Arginine 1940 carries the omega-N-methylarginine modification. A phosphoserine mark is found at serine 1952 and serine 1956. The residue at position 1960 (threonine 1960) is a Phosphothreonine. A compositionally biased stretch (polar residues) spans 1967-1976 (INETQPPQSE). Residue serine 1975 is modified to Phosphoserine.

It belongs to the TRAFAC class myosin-kinesin ATPase superfamily. Myosin family. As to quaternary structure, myosin is a hexameric protein that consists of 2 heavy chain subunits (MHC), 2 alkali light chain subunits (MLC) and 2 regulatory light chain subunits (MLC-2). Interacts with PLEKHG6. Interacts with ECPAS. Interacts with KIF26B. Interacts with LARP6. Interacts with MCC. Interacts with CFAP95. Post-translationally, phosphorylated by ABL2.

Its subcellular location is the cell projection. It is found in the lamellipodium. Functionally, cellular myosin that appears to play a role in cytokinesis, cell shape, and specialized functions such as secretion and capping. Involved with LARP6 in the stabilization of type I collagen mRNAs for CO1A1 and CO1A2. During cell spreading, plays an important role in cytoskeleton reorganization, focal contacts formation (in the central part but not the margins of spreading cells), and lamellipodial extension; this function is mechanically antagonized by MYH9. The chain is Myosin-10 (MYH10) from Bos taurus (Bovine).